A 543-amino-acid chain; its full sequence is Ipecac alkaloid beta-glucosidase 3 (543 aa).

Residues Gln36, His140, 185–186 (NE), Tyr350, Glu422, Trp471, and Phe487 each bind a beta-D-glucoside. The active-site Proton donor is the Glu186. Glu422 functions as the Nucleophile in the catalytic mechanism.

It belongs to the glycosyl hydrolase 1 family.

The protein localises to the cytoplasm. It is found in the cytosol. The catalysed reaction is deacetylipecoside + H2O = deacetylipecoside aglycone + D-glucose. It carries out the reaction deacetylisoipecoside + H2O = deacetylisoipecoside aglycone + D-glucose. The protein operates within alkaloid biosynthesis. Beta-glucosidase catalyzing deglucosylation on N-deacetylisoipecoside and N-deacetylipecoside. In Carapichea ipecacuanha (Ipecac), this protein is Ipecac alkaloid beta-glucosidase 3.